The chain runs to 401 residues: Argininosuccinate synthase (401 aa).

9 to 17 (AYSGGLDTS) serves as a coordination point for ATP. Tyrosine 86 contacts L-citrulline. Glycine 116 is an ATP binding site. Residues threonine 118, asparagine 122, and aspartate 123 each coordinate L-aspartate. Residue asparagine 122 participates in L-citrulline binding. 5 residues coordinate L-citrulline: arginine 126, serine 174, serine 183, glutamate 259, and tyrosine 271.

This sequence belongs to the argininosuccinate synthase family. Type 1 subfamily. In terms of assembly, homotetramer.

The protein localises to the cytoplasm. It carries out the reaction L-citrulline + L-aspartate + ATP = 2-(N(omega)-L-arginino)succinate + AMP + diphosphate + H(+). It functions in the pathway amino-acid biosynthesis; L-arginine biosynthesis; L-arginine from L-ornithine and carbamoyl phosphate: step 2/3. This chain is Argininosuccinate synthase, found in Bacillus thuringiensis (strain Al Hakam).